Reading from the N-terminus, the 119-residue chain is Fluoride-specific ion channel FluC (119 aa).

3 helical membrane passes run 37–54 (LFANWTGALLIGIFAETV), 61–83 (LLLITGFLGSLTTLSGFSLETVT), and 93–112 (ALSNIFLHTAGSLLLTWLGL). 2 residues coordinate Na(+): Gly69 and Thr72.

It belongs to the fluoride channel Fluc/FEX (TC 1.A.43) family.

The protein localises to the cell inner membrane. The enzyme catalyses fluoride(in) = fluoride(out). Na(+) is not transported, but it plays an essential structural role and its presence is essential for fluoride channel function. Fluoride-specific ion channel. Important for reducing fluoride concentration in the cell, thus reducing its toxicity. The polypeptide is Fluoride-specific ion channel FluC (Neisseria meningitidis serogroup C (strain 053442)).